The sequence spans 341 residues: GTPase Obg (341 aa).

An Obg domain is found at 1 to 159 (MKFVDEALIK…RNLRLELRVL (159 aa)). The interval 128-150 (TRYKSSVNRSPRQTTPGSPGESR) is disordered. Residues 129–144 (RYKSSVNRSPRQTTPG) show a composition bias toward polar residues. Residues 160–334 (ADVGLLGLPN…LCYALMQLID (175 aa)) form the OBG-type G domain. GTP-binding positions include 166-173 (GLPNAGKS), 191-195 (FTTLH), 213-216 (DIPG), 283-286 (NKID), and 315-317 (SAI). 2 residues coordinate Mg(2+): Ser173 and Thr193.

It belongs to the TRAFAC class OBG-HflX-like GTPase superfamily. OBG GTPase family. Monomer. The cofactor is Mg(2+).

It is found in the cytoplasm. Functionally, an essential GTPase which binds GTP, GDP and possibly (p)ppGpp with moderate affinity, with high nucleotide exchange rates and a fairly low GTP hydrolysis rate. Plays a role in control of the cell cycle, stress response, ribosome biogenesis and in those bacteria that undergo differentiation, in morphogenesis control. The chain is GTPase Obg from Legionella pneumophila (strain Paris).